An 856-amino-acid chain; its full sequence is DNA mismatch repair protein MutS (856 aa).

611-618 (GPNMGGKS) is a binding site for ATP.

It belongs to the DNA mismatch repair MutS family.

Functionally, this protein is involved in the repair of mismatches in DNA. It is possible that it carries out the mismatch recognition step. This protein has a weak ATPase activity. This is DNA mismatch repair protein MutS from Histophilus somni (strain 129Pt) (Haemophilus somnus).